The following is a 1203-amino-acid chain: DNA-directed RNA polymerase subunit beta' (1203 aa).

Residues Cys-60, Cys-62, Cys-75, and Cys-78 each contribute to the Zn(2+) site. 3 residues coordinate Mg(2+): Asp-449, Asp-451, and Asp-453. The Zn(2+) site is built by Cys-818, Cys-892, Cys-899, and Cys-902.

The protein belongs to the RNA polymerase beta' chain family. The RNAP catalytic core consists of 2 alpha, 1 beta, 1 beta' and 1 omega subunit. When a sigma factor is associated with the core the holoenzyme is formed, which can initiate transcription. Requires Mg(2+) as cofactor. The cofactor is Zn(2+).

The enzyme catalyses RNA(n) + a ribonucleoside 5'-triphosphate = RNA(n+1) + diphosphate. In terms of biological role, DNA-dependent RNA polymerase catalyzes the transcription of DNA into RNA using the four ribonucleoside triphosphates as substrates. The polypeptide is DNA-directed RNA polymerase subunit beta' (Bacillus thuringiensis (strain Al Hakam)).